Here is a 367-residue protein sequence, read N- to C-terminus: Dual specificity protein phosphatase 1 (367 aa).

Residues 20–137 (RAAQCLLLDC…FSASCPELCS (118 aa)) enclose the Rhodanese domain. Positions 173-314 (GPVEILSFLY…LLQFESQVLA (142 aa)) constitute a Tyrosine-protein phosphatase domain. Catalysis depends on Cys-258, which acts as the Phosphocysteine intermediate. Phosphoserine; by MAPK1 and MAPK3 occurs at positions 359 and 364.

It belongs to the protein-tyrosine phosphatase family. Non-receptor class dual specificity subfamily. In terms of processing, phosphorylation at Ser-359 and Ser-364 by MAPK1/ERK2 and MAPK3/ERK1 reduces its rate of degradation. Post-translationally, 'Lys-48'-linked polyubiquitinated by NEURL3, leading to proteasomal degradation. As to expression, brain. High level expression seen in the cingulate gyrus within the retrospinal cortex, ventral and medial divisions of the anterior thalamus and the medial geniculate nucleus. Expressed at moderate levels in the parietal and temporal cortex. Expressed in the cerebellum.

The protein localises to the nucleus. The enzyme catalyses O-phospho-L-tyrosyl-[protein] + H2O = L-tyrosyl-[protein] + phosphate. The catalysed reaction is O-phospho-L-seryl-[protein] + H2O = L-seryl-[protein] + phosphate. It catalyses the reaction O-phospho-L-threonyl-[protein] + H2O = L-threonyl-[protein] + phosphate. Dual specificity phosphatase that dephosphorylates MAP kinase MAPK1/ERK2 on both 'Thr-183' and 'Tyr-185', regulating its activity during the meiotic cell cycle. The chain is Dual specificity protein phosphatase 1 from Rattus norvegicus (Rat).